Consider the following 424-residue polypeptide: MTAIIDIVGREILDSRGNPTVEVDVVLEDGSMGRAAVPSGASTGAHEAVELRDGGARYLGKGVLKAVEAVNGELFEAIGGMEAENQIHIDQTMIELDGTPNKSRLGANAILGVSLAVAKAAADAAGLPLYRYVGGTKAHILPVPMMNIINGGAHADNPIDFQEFMILPVGAPTLREGVRWGSEIFHTLRKKLKDAGHNTNVGDEGGFAPNLKSAPVALDFIMESIEKAGFKPGEEIALGLDCAATEFFKDGNYVYEGEKKTRDPKAQAKYLAKLAADYPIVSIEDGLAEDDWEGWKYLTDLIGKKTQLVGDDLFVTNTARLRDGIRMGVANSILVKVNQIGSLTETLDAVETAHKAGYTAVMSHRSGETEDSTIADLAVATNCGQIKTGSLSRSDRMAKYNQLIRIEEELGKQARYAGKSVIKG.

Q162 lines the (2R)-2-phosphoglycerate pocket. E204 serves as the catalytic Proton donor. Positions 241, 284, and 311 each coordinate Mg(2+). (2R)-2-phosphoglycerate contacts are provided by K336, R365, S366, and K387. The active-site Proton acceptor is K336.

This sequence belongs to the enolase family. The cofactor is Mg(2+).

Its subcellular location is the cytoplasm. It is found in the secreted. The protein resides in the cell surface. The enzyme catalyses (2R)-2-phosphoglycerate = phosphoenolpyruvate + H2O. The protein operates within carbohydrate degradation; glycolysis; pyruvate from D-glyceraldehyde 3-phosphate: step 4/5. In terms of biological role, catalyzes the reversible conversion of 2-phosphoglycerate (2-PG) into phosphoenolpyruvate (PEP). It is essential for the degradation of carbohydrates via glycolysis. This chain is Enolase, found in Mesorhizobium japonicum (strain LMG 29417 / CECT 9101 / MAFF 303099) (Mesorhizobium loti (strain MAFF 303099)).